The chain runs to 392 residues: 1-deoxy-D-xylulose 5-phosphate reductoisomerase (392 aa).

Positions 10, 11, 12, 13, and 124 each coordinate NADPH. 1-deoxy-D-xylulose 5-phosphate is bound at residue Lys-125. Residue Glu-126 participates in NADPH binding. Asp-150 is a binding site for Mn(2+). 1-deoxy-D-xylulose 5-phosphate contacts are provided by Ser-151, Glu-152, Ser-180, and His-203. Glu-152 is a Mn(2+) binding site. Residue Gly-209 coordinates NADPH. Residues Ser-216, Asn-221, Lys-222, and Glu-225 each coordinate 1-deoxy-D-xylulose 5-phosphate. Glu-225 lines the Mn(2+) pocket.

It belongs to the DXR family. Mg(2+) is required as a cofactor. Mn(2+) serves as cofactor.

It carries out the reaction 2-C-methyl-D-erythritol 4-phosphate + NADP(+) = 1-deoxy-D-xylulose 5-phosphate + NADPH + H(+). The protein operates within isoprenoid biosynthesis; isopentenyl diphosphate biosynthesis via DXP pathway; isopentenyl diphosphate from 1-deoxy-D-xylulose 5-phosphate: step 1/6. Its function is as follows. Catalyzes the NADPH-dependent rearrangement and reduction of 1-deoxy-D-xylulose-5-phosphate (DXP) to 2-C-methyl-D-erythritol 4-phosphate (MEP). The polypeptide is 1-deoxy-D-xylulose 5-phosphate reductoisomerase (Saccharophagus degradans (strain 2-40 / ATCC 43961 / DSM 17024)).